We begin with the raw amino-acid sequence, 196 residues long: Pyridoxal 5'-phosphate synthase subunit PdxT (196 aa).

An L-glutamine-binding site is contributed by 47-49 (GES). Cys-79 (nucleophile) is an active-site residue. L-glutamine contacts are provided by residues Arg-106 and 134–135 (IR). Residues His-170 and Glu-172 each act as charge relay system in the active site.

It belongs to the glutaminase PdxT/SNO family. As to quaternary structure, in the presence of PdxS, forms a dodecamer of heterodimers. Only shows activity in the heterodimer.

The catalysed reaction is aldehydo-D-ribose 5-phosphate + D-glyceraldehyde 3-phosphate + L-glutamine = pyridoxal 5'-phosphate + L-glutamate + phosphate + 3 H2O + H(+). The enzyme catalyses L-glutamine + H2O = L-glutamate + NH4(+). The protein operates within cofactor biosynthesis; pyridoxal 5'-phosphate biosynthesis. Functionally, catalyzes the hydrolysis of glutamine to glutamate and ammonia as part of the biosynthesis of pyridoxal 5'-phosphate. The resulting ammonia molecule is channeled to the active site of PdxS. This Bacillus thuringiensis subsp. konkukian (strain 97-27) protein is Pyridoxal 5'-phosphate synthase subunit PdxT.